A 100-amino-acid polypeptide reads, in one-letter code: NADH-quinone oxidoreductase subunit K (100 aa).

Helical transmembrane passes span 4–24 (LTHG…GLVI), 28–48 (LLFM…AFVV), and 60–80 (VMYI…LALL).

Belongs to the complex I subunit 4L family. As to quaternary structure, NDH-1 is composed of 13 different subunits. Subunits NuoA, H, J, K, L, M, N constitute the membrane sector of the complex.

The protein resides in the cell inner membrane. It catalyses the reaction a quinone + NADH + 5 H(+)(in) = a quinol + NAD(+) + 4 H(+)(out). NDH-1 shuttles electrons from NADH, via FMN and iron-sulfur (Fe-S) centers, to quinones in the respiratory chain. The immediate electron acceptor for the enzyme in this species is believed to be ubiquinone. Couples the redox reaction to proton translocation (for every two electrons transferred, four hydrogen ions are translocated across the cytoplasmic membrane), and thus conserves the redox energy in a proton gradient. The sequence is that of NADH-quinone oxidoreductase subunit K from Enterobacter sp. (strain 638).